The primary structure comprises 236 residues: Ribose-5-phosphate isomerase A (236 aa).

Residues threonine 33–threonine 36, aspartate 90–aspartate 93, and lysine 103–glycine 106 each bind substrate. Glutamate 112 functions as the Proton acceptor in the catalytic mechanism. Lysine 130 contributes to the substrate binding site.

The protein belongs to the ribose 5-phosphate isomerase family. In terms of assembly, homodimer.

It catalyses the reaction aldehydo-D-ribose 5-phosphate = D-ribulose 5-phosphate. It participates in carbohydrate degradation; pentose phosphate pathway; D-ribose 5-phosphate from D-ribulose 5-phosphate (non-oxidative stage): step 1/1. Catalyzes the reversible conversion of ribose-5-phosphate to ribulose 5-phosphate. The sequence is that of Ribose-5-phosphate isomerase A from Nostoc sp. (strain PCC 7120 / SAG 25.82 / UTEX 2576).